A 454-amino-acid chain; its full sequence is Bifunctional protein GlmU (454 aa).

Positions 1–226 are pyrophosphorylase; it reads MSLNVVILAA…AIEVEGANNR (226 aa). UDP-N-acetyl-alpha-D-glucosamine is bound by residues 8 to 11, K22, Q73, 78 to 79, 100 to 102, G137, E151, N166, and N224; these read LAAG, GT, and YGD. D102 provides a ligand contact to Mg(2+). N224 is a binding site for Mg(2+). Positions 227–247 are linker; the sequence is VQLAQLERAYQARAAEKMMLE. Residues 248-454 are N-acetyltransferase; sequence GANLRDPARI…GWQRPIKIKK (207 aa). UDP-N-acetyl-alpha-D-glucosamine is bound by residues R330 and K348. H360 acts as the Proton acceptor in catalysis. The UDP-N-acetyl-alpha-D-glucosamine site is built by Y363 and N374. Acetyl-CoA contacts are provided by residues A377, 383–384, S402, A420, and R437; that span reads NY.

The protein in the N-terminal section; belongs to the N-acetylglucosamine-1-phosphate uridyltransferase family. It in the C-terminal section; belongs to the transferase hexapeptide repeat family. Homotrimer. The cofactor is Mg(2+).

The protein localises to the cytoplasm. The catalysed reaction is alpha-D-glucosamine 1-phosphate + acetyl-CoA = N-acetyl-alpha-D-glucosamine 1-phosphate + CoA + H(+). It catalyses the reaction N-acetyl-alpha-D-glucosamine 1-phosphate + UTP + H(+) = UDP-N-acetyl-alpha-D-glucosamine + diphosphate. It functions in the pathway nucleotide-sugar biosynthesis; UDP-N-acetyl-alpha-D-glucosamine biosynthesis; N-acetyl-alpha-D-glucosamine 1-phosphate from alpha-D-glucosamine 6-phosphate (route II): step 2/2. Its pathway is nucleotide-sugar biosynthesis; UDP-N-acetyl-alpha-D-glucosamine biosynthesis; UDP-N-acetyl-alpha-D-glucosamine from N-acetyl-alpha-D-glucosamine 1-phosphate: step 1/1. It participates in bacterial outer membrane biogenesis; LPS lipid A biosynthesis. Catalyzes the last two sequential reactions in the de novo biosynthetic pathway for UDP-N-acetylglucosamine (UDP-GlcNAc). The C-terminal domain catalyzes the transfer of acetyl group from acetyl coenzyme A to glucosamine-1-phosphate (GlcN-1-P) to produce N-acetylglucosamine-1-phosphate (GlcNAc-1-P), which is converted into UDP-GlcNAc by the transfer of uridine 5-monophosphate (from uridine 5-triphosphate), a reaction catalyzed by the N-terminal domain. The chain is Bifunctional protein GlmU from Shewanella frigidimarina (strain NCIMB 400).